A 133-amino-acid chain; its full sequence is Hemiptericin (133 aa).

Antibacterial peptide. Affects Gram-negative bacteria. The protein is Hemiptericin of Pyrrhocoris apterus (Sap sucking bug).